Here is a 740-residue protein sequence, read N- to C-terminus: Catalase-peroxidase (740 aa).

Positions Trp-107–Tyr-229 form a cross-link, tryptophyl-tyrosyl-methioninium (Trp-Tyr) (with M-255). His-108 (proton acceptor) is an active-site residue. Positions Tyr-229–Met-255 form a cross-link, tryptophyl-tyrosyl-methioninium (Tyr-Met) (with W-107). His-270 provides a ligand contact to heme b.

This sequence belongs to the peroxidase family. Peroxidase/catalase subfamily. As to quaternary structure, homodimer. The cofactor is heme b. Post-translationally, formation of the three residue Trp-Tyr-Met cross-link is important for the catalase, but not the peroxidase activity of the enzyme.

It carries out the reaction H2O2 + AH2 = A + 2 H2O. It catalyses the reaction 2 H2O2 = O2 + 2 H2O. In terms of biological role, bifunctional enzyme with both catalase and broad-spectrum peroxidase activity. May play a role in the intracellular survival of mycobacteria. The sequence is that of Catalase-peroxidase from Mycobacterium bovis (strain ATCC BAA-935 / AF2122/97).